Consider the following 215-residue polypeptide: MSKVYDWLDERLEITPFVDDATGKFIPPHVNIFYCLGGITLVCFLIQFATGFAMTFYYRPTVAEAFESVNYIMTQVNFGWLLRSIHRWSASMMVLMMILHTFRVYLTGGFKKPRELTWVTGVILAVLTVSFGVTGYSLPWDQVGYWAVKIVSGVPSAIPVVGDALVQLIRGGEAVGQATLTRFYSLHTFVLPWLTAVFMTMHFLMIRRQGISGPL.

A helical membrane pass occupies residues 32 to 52 (IFYCLGGITLVCFLIQFATGF). Heme c is bound at residue Cys35. Heme b is bound by residues His86 and His100. Helical transmembrane passes span 90–110 (ASMM…TGGF), 116–136 (LTWV…VTGY), and 186–206 (LHTF…FLMI). The heme b site is built by His187 and His202.

It belongs to the cytochrome b family. PetB subfamily. As to quaternary structure, the 4 large subunits of the cytochrome b6-f complex are cytochrome b6, subunit IV (17 kDa polypeptide, PetD), cytochrome f and the Rieske protein, while the 4 small subunits are PetG, PetL, PetM and PetN. The complex functions as a dimer. It depends on heme b as a cofactor. The cofactor is heme c.

It is found in the cellular thylakoid membrane. Functionally, component of the cytochrome b6-f complex, which mediates electron transfer between photosystem II (PSII) and photosystem I (PSI), cyclic electron flow around PSI, and state transitions. The protein is Cytochrome b6 of Synechococcus sp. (strain JA-3-3Ab) (Cyanobacteria bacterium Yellowstone A-Prime).